Consider the following 422-residue polypeptide: Vitellogenin-2 (422 aa).

Residues Met1–His20 form the signal peptide. Disordered stretches follow at residues Gln161 to Gly191 and Phe399 to Asn422. Residues Asn180–Pro189 show a composition bias toward polar residues.

This sequence belongs to the AB hydrolase superfamily. Lipase family. As to expression, synthesized in the fat body and ovarian follicle cells and accumulate in the oocyte.

It localises to the secreted. Its function is as follows. Vitellogenin is the major yolk protein of eggs where it is used as a food source during embryogenesis. This chain is Vitellogenin-2 (VG2-delta), found in Ceratitis capitata (Mediterranean fruit fly).